The chain runs to 311 residues: Asialoglycoprotein receptor 2 (311 aa).

The tract at residues 1–44 (MAKDFQDIQQLSSEENDHPFHQGEGPGTRRLNPRRGNPFLKGPP) is disordered. At 1-58 (MAKDFQDIQQLSSEENDHPFHQGEGPGTRRLNPRRGNPFLKGPPPAQPLAQRLCSMVC) the chain is on the cytoplasmic side. An Endocytosis signal motif is present at residues 5 to 8 (FQDI). Ser-13 bears the Phosphoserine mark. A lipid anchor (S-palmitoyl cysteine) is attached at Cys-54. The helical; Signal-anchor for type II membrane protein transmembrane segment at 59 to 79 (FSLLALSFNILLLVVICVTGS) threads the bilayer. Topologically, residues 80–311 (QSEGHGGAQL…KRRNATGEVA (232 aa)) are extracellular. N-linked (GlcNAc...) asparagine glycosylation is found at Asn-102 and Asn-170. The region spanning 176–302 (CCPVNWVEHQ…LQVYRWVCEK (127 aa)) is the C-type lectin domain. 3 disulfide bridges follow: Cys-177-Cys-188, Cys-205-Cys-300, and Cys-278-Cys-292. N-linked (GlcNAc...) asparagine glycosylation occurs at Asn-305.

The functioning ligand-binding unit of this receptor is thought to be at least a dimer. Interacts with LASS2. As to quaternary structure, (Microbial infection) Interacts with hepatitis E virus capsid protein ORF2. In terms of tissue distribution, expressed exclusively in hepatic parenchymal cells.

It is found in the membrane. Mediates the endocytosis of plasma glycoproteins to which the terminal sialic acid residue on their complex carbohydrate moieties has been removed. The receptor recognizes terminal galactose and N-acetylgalactosamine units. After ligand binding to the receptor, the resulting complex is internalized and transported to a sorting organelle, where receptor and ligand are disassociated. The receptor then returns to the cell membrane surface. This Homo sapiens (Human) protein is Asialoglycoprotein receptor 2 (ASGR2).